The following is a 187-amino-acid chain: Threonylcarbamoyl-AMP synthase (187 aa).

Residues 4 to 187 form the YrdC-like domain; sequence TLDLDRAVAA…DARSGQILRD (184 aa).

The protein belongs to the SUA5 family. TsaC subfamily.

The protein resides in the cytoplasm. It carries out the reaction L-threonine + hydrogencarbonate + ATP = L-threonylcarbamoyladenylate + diphosphate + H2O. Functionally, required for the formation of a threonylcarbamoyl group on adenosine at position 37 (t(6)A37) in tRNAs that read codons beginning with adenine. Catalyzes the conversion of L-threonine, HCO(3)(-)/CO(2) and ATP to give threonylcarbamoyl-AMP (TC-AMP) as the acyladenylate intermediate, with the release of diphosphate. In Xanthomonas axonopodis pv. citri (strain 306), this protein is Threonylcarbamoyl-AMP synthase.